A 128-amino-acid polypeptide reads, in one-letter code: Fluoride-specific ion channel FluC (128 aa).

4 consecutive transmembrane segments (helical) span residues 2-22 (LTFA…GAWL), 37-57 (WGTL…VALI), 65-85 (AWIR…FSTF), and 101-121 (AAAY…LGLA). Na(+) is bound by residues glycine 77 and threonine 80.

It belongs to the fluoride channel Fluc/FEX (TC 1.A.43) family.

The protein localises to the cell inner membrane. It carries out the reaction fluoride(in) = fluoride(out). With respect to regulation, na(+) is not transported, but it plays an essential structural role and its presence is essential for fluoride channel function. In terms of biological role, fluoride-specific ion channel. Important for reducing fluoride concentration in the cell, thus reducing its toxicity. In Bordetella bronchiseptica (strain ATCC BAA-588 / NCTC 13252 / RB50) (Alcaligenes bronchisepticus), this protein is Fluoride-specific ion channel FluC.